We begin with the raw amino-acid sequence, 134 residues long: Seminal plasma protein PDC-109 (134 aa).

A signal peptide spans 1–25 (MALQLGLFLIWAGVSVFLQLDPVNG). The O-linked (GalNAc...) threonine glycan is linked to Thr-36. 2 Fibronectin type-II domains span residues 44–88 (PEDE…YCAQ) and 89–134 (RDYA…WKYC). 4 disulfide bridges follow: Cys-49–Cys-73, Cys-63–Cys-86, Cys-94–Cys-119, and Cys-108–Cys-134.

The protein belongs to the seminal plasma protein family. In terms of assembly, homodimer. Post-translationally, O-linked glycan consists of Gal-GalNAc disaccharide which is modified with a sialic acid residue (macro- and/or microheterogeneity account for differences between BSP-A1 and BSP-A2). As to expression, major component of seminal plasma.

It is found in the secreted. Functionally, could enhance the fertilizing capacity of bull spermatozoa upon interaction with heparin-like glycosaminoglycans present in the female genital tract. Exhibits both simulatory and inhibitory actions on the release of pituitary gonadotropins. The polypeptide is Seminal plasma protein PDC-109 (Bos taurus (Bovine)).